A 109-amino-acid chain; its full sequence is Small ribosomal subunit protein uS17 (109 aa).

The protein belongs to the universal ribosomal protein uS17 family. Part of the 30S ribosomal subunit.

Its function is as follows. One of the primary rRNA binding proteins, it binds specifically to the 5'-end of 16S ribosomal RNA. The protein is Small ribosomal subunit protein uS17 of Thermoplasma acidophilum (strain ATCC 25905 / DSM 1728 / JCM 9062 / NBRC 15155 / AMRC-C165).